Consider the following 222-residue polypeptide: Phosphate-specific transport system accessory protein PhoU homolog 1 (222 aa).

The protein belongs to the PhoU family. In terms of assembly, homodimer.

The protein localises to the cytoplasm. Its function is as follows. Plays a role in the regulation of phosphate uptake. This chain is Phosphate-specific transport system accessory protein PhoU homolog 1 (phoU1), found in Mycobacterium leprae (strain TN).